Consider the following 198-residue polypeptide: TM2 domain-containing protein 2 (198 aa).

A signal peptide spans 1 to 27 (MRWPVPPVGYLLLGGQGLLLTFSLISS). Residues 28–128 (QNQTSPVTYP…FLRGNKPCIK (101 aa)) lie on the Extracellular side of the membrane. Residues asparagine 29, asparagine 40, and asparagine 76 are each glycosylated (N-linked (GlcNAc...) asparagine). The helical transmembrane segment at 129–149 (YTGHYFITTLLYSFFLGCFGV) threads the bilayer. A TM2 domain is found at 131–179 (GHYFITTLLYSFFLGCFGVDRFCLGHTGTAVGKLLTLGGLGIWWFVDLI). Over 150 to 166 (DRFCLGHTGTAVGKLLT) the chain is Cytoplasmic. The helical transmembrane segment at 167–187 (LGGLGIWWFVDLILLITGGLM) threads the bilayer. At 188-198 (PSDNSNWCTIY) the chain is on the extracellular side.

Belongs to the TM2 family.

It localises to the membrane. The sequence is that of TM2 domain-containing protein 2 (tm2d2) from Xenopus tropicalis (Western clawed frog).